The sequence spans 303 residues: MIKHYPDNASNSFLKLRNSLISATGKAIGDYNMIEDGDTILVCMSGGKDSYTMLMMLLALQERAPVNFKLIAMNLDQKQPGFPAHILPAYLEQLGVDHRIVEADTYSIVKEKIPEGKTTCSLCSRLRRGIIYRTAQELGANKIALGHHRDDIVETLFLNMFFGAKMKAMPPKLATNKGEFHVIRPLAYCAEKDIASYARGMDFPIIPCDLCGSQENLQRQKVKDMLQAWEREQPGRVNNIFRAICNVEPSHLADTDLYDFKHMSQSKAEDEDPLFGDIDKESNPALSLVSSEGFRIEFKRNIA.

Residues 45–50 (SGGKDS) carry the PP-loop motif motif. C120, C123, and C211 together coordinate [4Fe-4S] cluster.

Belongs to the TtcA family. In terms of assembly, homodimer. It depends on Mg(2+) as a cofactor. [4Fe-4S] cluster serves as cofactor.

The protein resides in the cytoplasm. It carries out the reaction cytidine(32) in tRNA + S-sulfanyl-L-cysteinyl-[cysteine desulfurase] + AH2 + ATP = 2-thiocytidine(32) in tRNA + L-cysteinyl-[cysteine desulfurase] + A + AMP + diphosphate + H(+). Its pathway is tRNA modification. Functionally, catalyzes the ATP-dependent 2-thiolation of cytidine in position 32 of tRNA, to form 2-thiocytidine (s(2)C32). The sulfur atoms are provided by the cysteine/cysteine desulfurase (IscS) system. This Methylobacillus flagellatus (strain ATCC 51484 / DSM 6875 / VKM B-1610 / KT) protein is tRNA-cytidine(32) 2-sulfurtransferase.